Consider the following 442-residue polypeptide: ATP-dependent protease ATPase subunit HslU (442 aa).

ATP contacts are provided by residues I18 and 60-65 (GVGKTE). The segment at 136–157 (LPKPKNDWESTETDSSSNTRQV) is disordered. ATP-binding residues include D255, E320, and R392.

Belongs to the ClpX chaperone family. HslU subfamily. As to quaternary structure, a double ring-shaped homohexamer of HslV is capped on each side by a ring-shaped HslU homohexamer. The assembly of the HslU/HslV complex is dependent on binding of ATP.

The protein localises to the cytoplasm. Functionally, ATPase subunit of a proteasome-like degradation complex; this subunit has chaperone activity. The binding of ATP and its subsequent hydrolysis by HslU are essential for unfolding of protein substrates subsequently hydrolyzed by HslV. HslU recognizes the N-terminal part of its protein substrates and unfolds these before they are guided to HslV for hydrolysis. The polypeptide is ATP-dependent protease ATPase subunit HslU (Shewanella baltica (strain OS185)).